The sequence spans 265 residues: Mlc titration factor A (265 aa).

4 residues coordinate Zn(2+): H111, H148, H152, and E211.

Belongs to the MtfA family. Interacts with Mlc. Zn(2+) is required as a cofactor.

Its subcellular location is the cytoplasm. Functionally, involved in the modulation of the activity of the glucose-phosphotransferase system (glucose-PTS). Interacts with the transcriptional repressor Mlc, preventing its interaction with DNA and leading to the modulation of expression of genes regulated by Mlc, including ptsG, which encodes the PTS system glucose-specific EIICB component. Its function is as follows. Shows zinc-dependent metallopeptidase activity. In Escherichia coli (strain ATCC 8739 / DSM 1576 / NBRC 3972 / NCIMB 8545 / WDCM 00012 / Crooks), this protein is Mlc titration factor A.